The sequence spans 160 residues: Periplasmic nitrate reductase, electron transfer subunit (160 aa).

The signal sequence occupies residues 1–25 (MKTRIIFAALALAAAMPLLVSGVFA). Heme c is bound by residues histidine 73, cysteine 87, cysteine 90, histidine 91, histidine 108, cysteine 127, cysteine 130, and histidine 131.

It belongs to the NapB family. Component of the periplasmic nitrate reductase NapAB complex composed of NapA and NapB. Post-translationally, binds 2 heme C groups per subunit.

Its subcellular location is the periplasm. Functionally, electron transfer subunit of the periplasmic nitrate reductase complex NapAB. Receives electrons from the membrane-anchored tetraheme c-type NapC protein and transfers these to NapA subunit, thus allowing electron flow between membrane and periplasm. Essential for periplasmic nitrate reduction with nitrate as the terminal electron acceptor. This chain is Periplasmic nitrate reductase, electron transfer subunit, found in Azospirillum brasilense.